A 298-amino-acid polypeptide reads, in one-letter code: tRNA pseudouridine synthase B (298 aa).

D44 acts as the Nucleophile in catalysis.

It belongs to the pseudouridine synthase TruB family. Type 1 subfamily.

It catalyses the reaction uridine(55) in tRNA = pseudouridine(55) in tRNA. Functionally, responsible for synthesis of pseudouridine from uracil-55 in the psi GC loop of transfer RNAs. This chain is tRNA pseudouridine synthase B, found in Mycobacteroides abscessus (strain ATCC 19977 / DSM 44196 / CCUG 20993 / CIP 104536 / JCM 13569 / NCTC 13031 / TMC 1543 / L948) (Mycobacterium abscessus).